The chain runs to 249 residues: Probable transcriptional regulatory protein LIC_12886 (249 aa).

The protein belongs to the TACO1 family.

It is found in the cytoplasm. This is Probable transcriptional regulatory protein LIC_12886 from Leptospira interrogans serogroup Icterohaemorrhagiae serovar copenhageni (strain Fiocruz L1-130).